The sequence spans 274 residues: Large ribosomal subunit protein uL2 (274 aa).

The interval 1-23 (MAIKIYRPTSPGRRHHSVSSFEE) is disordered.

It belongs to the universal ribosomal protein uL2 family. As to quaternary structure, part of the 50S ribosomal subunit. Forms a bridge to the 30S subunit in the 70S ribosome.

One of the primary rRNA binding proteins. Required for association of the 30S and 50S subunits to form the 70S ribosome, for tRNA binding and peptide bond formation. It has been suggested to have peptidyltransferase activity; this is somewhat controversial. Makes several contacts with the 16S rRNA in the 70S ribosome. The sequence is that of Large ribosomal subunit protein uL2 from Dehalococcoides mccartyi (strain ATCC BAA-2100 / JCM 16839 / KCTC 5957 / BAV1).